The primary structure comprises 1097 residues: Protein STICHEL-like 3 (1097 aa).

Disordered stretches follow at residues 1–22 (MTTT…NNRI), 74–168 (SLRD…YRIG), 220–293 (NVRP…GFGE), 321–358 (GRSL…DSSS), and 400–436 (DSDL…LTEK). The span at 10–20 (RVASSSSTRNN) shows a compositional bias: polar residues. A compositionally biased stretch (basic and acidic residues) spans 95–113 (LPKKGDLVEGGRRSVDLKK). Over residues 126-136 (PVVNFGTSKVT) the composition is skewed to polar residues. Basic and acidic residues predominate over residues 137-168 (PSDERSGPVSGERDSGRRVKREESSRKSYRIG). The segment covering 227-241 (YGGGGGGGNTRGCAG) has biased composition (gly residues). Residues 245–259 (RPKRRKFRGTRRVRG) are compositionally biased toward basic residues. 2 stretches are compositionally biased toward basic and acidic residues: residues 281-291 (VEKHDGEKEGF) and 332-345 (KGGR…RNGS). Positions 346–358 (DKMMIQSDDDSSS) are enriched in low complexity. A compositionally biased stretch (basic residues) spans 411 to 429 (EKKHKKKSHVNARHRHRQQ). An ATP-binding site is contributed by 472–479 (GPNGTGKT). Cys-491, Cys-500, Cys-503, and Cys-506 together coordinate Zn(2+). Residues 742-770 (KEDMEKLRQALKTLSEAEKQLRVSNDKLT) are a coiled coil. Disordered regions lie at residues 790–828 (SSTA…DSRK), 913–932 (DPRN…DKSL), and 956–1003 (VTES…SQSI). 2 stretches are compositionally biased toward basic and acidic residues: residues 796-807 (GGRESSDHHLDP) and 818-828 (GLDRRRGDSRK). Residues 993–1003 (ASQSQNQSQSI) are compositionally biased toward polar residues.

The protein belongs to the DnaX/STICHEL family.

The sequence is that of Protein STICHEL-like 3 from Arabidopsis thaliana (Mouse-ear cress).